Here is a 182-residue protein sequence, read N- to C-terminus: Putative manganese efflux pump MntP (182 aa).

6 helical membrane passes run 6 to 26 (LIPL…VSLG), 37 to 57 (ILYI…IGMV), 71 to 91 (HFAG…STIL), 101 to 121 (IGIS…SVGL), 131 to 151 (IITI…GLLI), and 162 to 182 (YGEI…LFPI).

Belongs to the MntP (TC 9.B.29) family.

It is found in the cell membrane. In terms of biological role, probably functions as a manganese efflux pump. The sequence is that of Putative manganese efflux pump MntP from Bacillus cereus (strain G9842).